The following is a 244-amino-acid chain: Krueppel-like factor 9 (244 aa).

2 disordered regions span residues 26 to 51 and 79 to 143; these read EHGG…GDPG and PSVC…EKRH. The segment covering 32 to 51 has biased composition (basic and acidic residues); the sequence is EAERLRLPEREVTKEHGDPG. Serine 122 carries the post-translational modification Phosphoserine. Over residues 134–143 the composition is skewed to basic residues; it reads KGKHASEKRH. 3 C2H2-type zinc fingers span residues 143–167, 173–197, and 203–225; these read HKCP…YRVH, FPCT…YRTH, and FRCP…ARRH.

It belongs to the Sp1 C2H2-type zinc-finger protein family. In terms of assembly, interacts with ZZEF1.

Its subcellular location is the nucleus. In terms of biological role, transcription factor that binds to GC box promoter elements. Selectively activates mRNA synthesis from genes containing tandem repeats of GC boxes but represses genes with a single GC box. Acts as an epidermal circadian transcription factor regulating keratinocyte proliferation. The polypeptide is Krueppel-like factor 9 (Klf9) (Mus musculus (Mouse)).